The following is a 366-amino-acid chain: Pectinesterase A (366 aa).

The signal sequence occupies residues 1 to 24; that stretch reads MLKTISGTLALSLIIAASVHQAQA. Substrate contacts are provided by T109 and Q153. The active-site Proton donor is D178. The cysteines at positions 192 and 212 are disulfide-linked. D199 functions as the Nucleophile in the catalytic mechanism. Substrate is bound by residues R219, N226, Y230, R267, W269, and T272.

The protein belongs to the pectinesterase family. Monomer.

The protein resides in the secreted. It carries out the reaction [(1-&gt;4)-alpha-D-galacturonosyl methyl ester](n) + n H2O = [(1-&gt;4)-alpha-D-galacturonosyl](n) + n methanol + n H(+). It functions in the pathway glycan metabolism; pectin degradation; 2-dehydro-3-deoxy-D-gluconate from pectin: step 1/5. Functionally, involved in maceration and soft-rotting of plant tissue. This is Pectinesterase A (pemA) from Dickeya chrysanthemi (Pectobacterium chrysanthemi).